Consider the following 483-residue polypeptide: Proline--tRNA ligase (483 aa).

The protein belongs to the class-II aminoacyl-tRNA synthetase family. ProS type 3 subfamily. As to quaternary structure, homodimer.

The protein localises to the cytoplasm. The enzyme catalyses tRNA(Pro) + L-proline + ATP = L-prolyl-tRNA(Pro) + AMP + diphosphate. Its function is as follows. Catalyzes the attachment of proline to tRNA(Pro) in a two-step reaction: proline is first activated by ATP to form Pro-AMP and then transferred to the acceptor end of tRNA(Pro). This chain is Proline--tRNA ligase, found in Natranaerobius thermophilus (strain ATCC BAA-1301 / DSM 18059 / JW/NM-WN-LF).